The following is a 305-amino-acid chain: MSGITPERQTHLKQLEAESIHIIREVAAEFANPVMLYSIGKDSSVMLHLARKAFYPGTPPFPLMHVNTTWKFKEMIEFRDRMAAEVGMELIEHINEEGRAAGINPFDHGSAKYTDVMKTQSLKQALDKYGFDAAFGGARRDEEASRAKERVYSFRDKHHRWDPKNQRPELWNIYNGKVQKGESIRVFPLSNWTELDIWQYIYLESIPIVPLYYAAPRPVVERDGMQIMVDDERLPLEDGEVPEEKWVRFRTLGCYPLTGAVESTAATLPEIIQEMLLTRTSERSGRAIDHDQAGSMERKKREGYF.

Positions 283–305 (RSGRAIDHDQAGSMERKKREGYF) are disordered.

It belongs to the PAPS reductase family. CysD subfamily. Heterodimer composed of CysD, the smaller subunit, and CysN.

The catalysed reaction is sulfate + ATP + H(+) = adenosine 5'-phosphosulfate + diphosphate. The protein operates within sulfur metabolism; hydrogen sulfide biosynthesis; sulfite from sulfate: step 1/3. In terms of biological role, with CysN forms the ATP sulfurylase (ATPS) that catalyzes the adenylation of sulfate producing adenosine 5'-phosphosulfate (APS) and diphosphate, the first enzymatic step in sulfur assimilation pathway. APS synthesis involves the formation of a high-energy phosphoric-sulfuric acid anhydride bond driven by GTP hydrolysis by CysN coupled to ATP hydrolysis by CysD. This is Sulfate adenylyltransferase subunit 2 1 from Chromohalobacter salexigens (strain ATCC BAA-138 / DSM 3043 / CIP 106854 / NCIMB 13768 / 1H11).